The chain runs to 179 residues: Replication restart protein DnaT (179 aa).

The span at Ser151–Glu168 shows a compositional bias: polar residues. Residues Ser151–Gly179 are disordered.

The protein belongs to the DnaT family. In terms of assembly, homooligomerizes. Interacts with PriB. Component of the replication restart primosome. Primosome assembly occurs via a 'hand-off' mechanism. PriA binds to replication forks, subsequently PriB then DnaT bind; DnaT then displaces ssDNA to generate the helicase loading substrate.

In terms of biological role, involved in the restart of stalled replication forks, which reloads the replicative helicase on sites other than the origin of replication. Can function in multiple replication restart pathways. Displaces ssDNA from a PriB-ssDNA complex. Probably forms a spiral filament on ssDNA. The chain is Replication restart protein DnaT from Salmonella schwarzengrund (strain CVM19633).